Consider the following 151-residue polypeptide: SsrA-binding protein (151 aa).

This sequence belongs to the SmpB family.

Its subcellular location is the cytoplasm. In terms of biological role, required for rescue of stalled ribosomes mediated by trans-translation. Binds to transfer-messenger RNA (tmRNA), required for stable association of tmRNA with ribosomes. tmRNA and SmpB together mimic tRNA shape, replacing the anticodon stem-loop with SmpB. tmRNA is encoded by the ssrA gene; the 2 termini fold to resemble tRNA(Ala) and it encodes a 'tag peptide', a short internal open reading frame. During trans-translation Ala-aminoacylated tmRNA acts like a tRNA, entering the A-site of stalled ribosomes, displacing the stalled mRNA. The ribosome then switches to translate the ORF on the tmRNA; the nascent peptide is terminated with the 'tag peptide' encoded by the tmRNA and targeted for degradation. The ribosome is freed to recommence translation, which seems to be the essential function of trans-translation. The polypeptide is SsrA-binding protein (Chlamydia pneumoniae (Chlamydophila pneumoniae)).